A 63-amino-acid polypeptide reads, in one-letter code: Putative flagellar calcium-binding protein (63 aa).

Over residues 1–11 (MGCISSKSTQT) the composition is skewed to polar residues. Positions 1 to 23 (MGCISSKSTQTGKKEGKTAAERK) are disordered. Residues 12–23 (GKKEGKTAAERK) show a composition bias toward basic and acidic residues. The region spanning 40–63 (EDKARRIELFKKFDKNNTGKLSME) is the EF-hand domain. Ca(2+) contacts are provided by D53, N55, T57, and K59.

It belongs to the calflagin family.

It localises to the cell projection. It is found in the cilium. The protein resides in the flagellum. This Crithidia fasciculata protein is Putative flagellar calcium-binding protein (CABP).